A 293-amino-acid chain; its full sequence is TBC1 domain family member 7 (293 aa).

Positions 50-231 constitute a Rab-GAP TBC domain; the sequence is PLPSMYRALV…RVWDKVVSGS (182 aa).

In terms of assembly, component of the TSC-TBC complex (also named Rhebulator complex), composed of 2 molecules of TSC1, 2 molecules of TSC2 and 1 molecule of TBC1D7. Interacts with TSC1 (via C-terminal half of the coiled-coil domain). Highly expressed in heart, and slightly in kidney, liver and placenta.

Its subcellular location is the lysosome membrane. It is found in the cytoplasmic vesicle. It localises to the cytoplasm. The protein localises to the cytosol. In terms of biological role, non-catalytic component of the TSC-TBC complex, a multiprotein complex that acts as a negative regulator of the canonical mTORC1 complex, an evolutionarily conserved central nutrient sensor that stimulates anabolic reactions and macromolecule biosynthesis to promote cellular biomass generation and growth. The TSC-TBC complex acts as a GTPase-activating protein (GAP) for the small GTPase RHEB, a direct activator of the protein kinase activity of mTORC1. In absence of nutrients, the TSC-TBC complex inhibits mTORC1, thereby preventing phosphorylation of ribosomal protein S6 kinase (RPS6KB1 and RPS6KB2) and EIF4EBP1 (4E-BP1) by the mTORC1 signaling. The TSC-TBC complex is inactivated in response to nutrients, relieving inhibition of mTORC1. The polypeptide is TBC1 domain family member 7 (Homo sapiens (Human)).